The sequence spans 164 residues: Peptidyl-prolyl cis-trans isomerase CYP18-2 (164 aa).

The PPIase cyclophilin-type domain occupies 12-162 (VTLETSMGPF…HEVKILRTKV (151 aa)).

Belongs to the cyclophilin-type PPIase family. As to expression, ubiquitous.

It is found in the cytoplasm. It carries out the reaction [protein]-peptidylproline (omega=180) = [protein]-peptidylproline (omega=0). In terms of biological role, PPIases accelerate the folding of proteins. It catalyzes the cis-trans isomerization of proline imidic peptide bonds in oligopeptides. The polypeptide is Peptidyl-prolyl cis-trans isomerase CYP18-2 (CYP18-2) (Arabidopsis thaliana (Mouse-ear cress)).